The following is a 905-amino-acid chain: Cation-transporting ATPase pma1 (905 aa).

4 helical membrane passes run 60-80, 81-101, 248-268, and 283-303; these read FLLQ…TVKA, FLGS…NAII, FSHT…AVGW, and ALAV…TLAI. The active-site 4-aspartylphosphate intermediate is D333. The next 5 helical transmembrane spans lie at 716 to 736, 774 to 794, 809 to 829, 848 to 868, and 880 to 900; these read ILIS…VLWL, LLHR…GMFE, MAIQ…SQLG, ILLL…QLPF, and WQQW…AILA.

This sequence belongs to the cation transport ATPase (P-type) (TC 3.A.3) family. Type IIA subfamily.

It localises to the cell membrane. It catalyses the reaction ATP + H2O = ADP + phosphate + H(+). In terms of biological role, could mediate calcium influx. This chain is Cation-transporting ATPase pma1 (pma1), found in Synechocystis sp. (strain ATCC 27184 / PCC 6803 / Kazusa).